We begin with the raw amino-acid sequence, 259 residues long: Leucyl/phenylalanyl-tRNA--protein transferase (259 aa).

It belongs to the L/F-transferase family.

It localises to the cytoplasm. It catalyses the reaction N-terminal L-lysyl-[protein] + L-leucyl-tRNA(Leu) = N-terminal L-leucyl-L-lysyl-[protein] + tRNA(Leu) + H(+). It carries out the reaction N-terminal L-arginyl-[protein] + L-leucyl-tRNA(Leu) = N-terminal L-leucyl-L-arginyl-[protein] + tRNA(Leu) + H(+). The enzyme catalyses L-phenylalanyl-tRNA(Phe) + an N-terminal L-alpha-aminoacyl-[protein] = an N-terminal L-phenylalanyl-L-alpha-aminoacyl-[protein] + tRNA(Phe). Functionally, functions in the N-end rule pathway of protein degradation where it conjugates Leu, Phe and, less efficiently, Met from aminoacyl-tRNAs to the N-termini of proteins containing an N-terminal arginine or lysine. In Teredinibacter turnerae (strain ATCC 39867 / T7901), this protein is Leucyl/phenylalanyl-tRNA--protein transferase.